Here is a 504-residue protein sequence, read N- to C-terminus: ATP synthase subunit alpha (504 aa).

Residue 171–178 coordinates ATP; that stretch reads GDRATGKT.

The protein belongs to the ATPase alpha/beta chains family. F-type ATPases have 2 components, CF(1) - the catalytic core - and CF(0) - the membrane proton channel. CF(1) has five subunits: alpha(3), beta(3), gamma(1), delta(1), epsilon(1). CF(0) has three main subunits: a(1), b(2) and c(9-12). The alpha and beta chains form an alternating ring which encloses part of the gamma chain. CF(1) is attached to CF(0) by a central stalk formed by the gamma and epsilon chains, while a peripheral stalk is formed by the delta and b chains.

Its subcellular location is the cell inner membrane. The enzyme catalyses ATP + H2O + 4 H(+)(in) = ADP + phosphate + 5 H(+)(out). Functionally, produces ATP from ADP in the presence of a proton gradient across the membrane. The alpha chain is a regulatory subunit. This chain is ATP synthase subunit alpha, found in Sulfurihydrogenibium sp. (strain YO3AOP1).